The following is a 256-amino-acid chain: Trans-aconitate 2-methyltransferase (256 aa).

It belongs to the methyltransferase superfamily. Tam family.

It is found in the cytoplasm. It catalyses the reaction trans-aconitate + S-adenosyl-L-methionine = (E)-3-(methoxycarbonyl)pent-2-enedioate + S-adenosyl-L-homocysteine. Functionally, catalyzes the S-adenosylmethionine monomethyl esterification of trans-aconitate. The chain is Trans-aconitate 2-methyltransferase from Rhizobium leguminosarum bv. trifolii (strain WSM2304).